The following is a 95-amino-acid chain: Large ribosomal subunit protein bL27 (95 aa).

Positions 1–9 (MLKMNLQFF) are excised as a propeptide.

This sequence belongs to the bacterial ribosomal protein bL27 family. Post-translationally, the N-terminus is cleaved by ribosomal processing cysteine protease Prp.

The polypeptide is Large ribosomal subunit protein bL27 (Lachnoclostridium phytofermentans (strain ATCC 700394 / DSM 18823 / ISDg) (Clostridium phytofermentans)).